A 321-amino-acid chain; its full sequence is Acetylglutamate kinase (321 aa).

Substrate-binding positions include 88–89, Arg110, and Asn216; that span reads GG.

The protein belongs to the acetylglutamate kinase family. ArgB subfamily.

Its subcellular location is the cytoplasm. The enzyme catalyses N-acetyl-L-glutamate + ATP = N-acetyl-L-glutamyl 5-phosphate + ADP. Its pathway is amino-acid biosynthesis; L-arginine biosynthesis; N(2)-acetyl-L-ornithine from L-glutamate: step 2/4. Its function is as follows. Catalyzes the ATP-dependent phosphorylation of N-acetyl-L-glutamate. In Ehrlichia chaffeensis (strain ATCC CRL-10679 / Arkansas), this protein is Acetylglutamate kinase.